Here is a 411-residue protein sequence, read N- to C-terminus: Citrate synthase (411 aa).

Residues histidine 304 and aspartate 363 contribute to the active site.

Belongs to the citrate synthase family.

It catalyses the reaction oxaloacetate + acetyl-CoA + H2O = citrate + CoA + H(+). It functions in the pathway carbohydrate metabolism; tricarboxylic acid cycle; isocitrate from oxaloacetate: step 1/2. This chain is Citrate synthase (gltA), found in Rickettsia massiliae.